A 252-amino-acid chain; its full sequence is uncharacterized protein (252 aa).

9 to 33 (LITGGSAGIGLELAKRLLELGNEVI) is an NADP(+) binding site. Residue S139 participates in substrate binding. Y152 serves as the catalytic Proton acceptor.

This sequence belongs to the short-chain dehydrogenases/reductases (SDR) family.

Its subcellular location is the cytoplasm. This is an uncharacterized protein from Bacillus subtilis (strain 168).